We begin with the raw amino-acid sequence, 1381 residues long: DNA-directed RNA polymerase subunit beta'' (1381 aa).

Residues cysteine 224, cysteine 295, cysteine 302, and cysteine 305 each coordinate Zn(2+).

It belongs to the RNA polymerase beta' chain family. RpoC2 subfamily. As to quaternary structure, in plastids the minimal PEP RNA polymerase catalytic core is composed of four subunits: alpha, beta, beta', and beta''. When a (nuclear-encoded) sigma factor is associated with the core the holoenzyme is formed, which can initiate transcription. Requires Zn(2+) as cofactor.

The protein resides in the plastid. It localises to the chloroplast. The enzyme catalyses RNA(n) + a ribonucleoside 5'-triphosphate = RNA(n+1) + diphosphate. Functionally, DNA-dependent RNA polymerase catalyzes the transcription of DNA into RNA using the four ribonucleoside triphosphates as substrates. In Guizotia abyssinica (Niger), this protein is DNA-directed RNA polymerase subunit beta''.